Here is a 170-residue protein sequence, read N- to C-terminus: Adenine phosphoribosyltransferase (170 aa).

This sequence belongs to the purine/pyrimidine phosphoribosyltransferase family. In terms of assembly, homodimer.

The protein resides in the cytoplasm. The enzyme catalyses AMP + diphosphate = 5-phospho-alpha-D-ribose 1-diphosphate + adenine. The protein operates within purine metabolism; AMP biosynthesis via salvage pathway; AMP from adenine: step 1/1. Its function is as follows. Catalyzes a salvage reaction resulting in the formation of AMP, that is energically less costly than de novo synthesis. In Symbiobacterium thermophilum (strain DSM 24528 / JCM 14929 / IAM 14863 / T), this protein is Adenine phosphoribosyltransferase.